Here is a 238-residue protein sequence, read N- to C-terminus: MATTVKELKATARPKSGKGAARAERRAGRVPGVIYGNNQPPVTISIEDRELRQRILAGRFLTTLVDIDLEGKKHRVIPRDYHLDPVKDFPIHVDFMRLGEGATIRISVPLHVVKSEASPGVKRGGTVNIVAHAIELECGVESIPQYIEADVGSLEIGHSLHLSDVKLPAGVKALTREDATLVTIVPPSGYAEEQKAAAAAAAGGAAPAAAAPAAGAAAPAAAAPAAAAKAPAGGDKKK.

The span at 1 to 10 (MATTVKELKA) shows a compositional bias: basic and acidic residues. The segment at 1 to 24 (MATTVKELKATARPKSGKGAARAE) is disordered.

The protein belongs to the bacterial ribosomal protein bL25 family. CTC subfamily. In terms of assembly, part of the 50S ribosomal subunit; part of the 5S rRNA/L5/L18/L25 subcomplex. Contacts the 5S rRNA. Binds to the 5S rRNA independently of L5 and L18.

Functionally, this is one of the proteins that binds to the 5S RNA in the ribosome where it forms part of the central protuberance. This chain is Large ribosomal subunit protein bL25, found in Bradyrhizobium diazoefficiens (strain JCM 10833 / BCRC 13528 / IAM 13628 / NBRC 14792 / USDA 110).